An 88-amino-acid chain; its full sequence is UPF0298 protein BA_4142/GBAA_4142/BAS3844 (88 aa).

It belongs to the UPF0298 family.

The protein resides in the cytoplasm. The chain is UPF0298 protein BA_4142/GBAA_4142/BAS3844 from Bacillus anthracis.